The chain runs to 328 residues: tRNA dimethylallyltransferase (328 aa).

Residue 10-17 (GPTASGKT) participates in ATP binding. 12–17 (TASGKT) is a substrate binding site.

The protein belongs to the IPP transferase family. In terms of assembly, monomer. It depends on Mg(2+) as a cofactor.

The catalysed reaction is adenosine(37) in tRNA + dimethylallyl diphosphate = N(6)-dimethylallyladenosine(37) in tRNA + diphosphate. In terms of biological role, catalyzes the transfer of a dimethylallyl group onto the adenine at position 37 in tRNAs that read codons beginning with uridine, leading to the formation of N6-(dimethylallyl)adenosine (i(6)A). In Bifidobacterium longum (strain NCC 2705), this protein is tRNA dimethylallyltransferase.